The sequence spans 202 residues: UPF0301 protein BCG_0069 (202 aa).

The protein belongs to the UPF0301 (AlgH) family.

The chain is UPF0301 protein BCG_0069 from Mycobacterium bovis (strain BCG / Pasteur 1173P2).